A 290-amino-acid chain; its full sequence is Chloride intracellular channel exc-4 (290 aa).

A helical transmembrane segment spans residues leucine 37–valine 57.

This sequence belongs to the chloride channel CLIC family. Monomer. In terms of tissue distribution, expressed in the secretory system, hypodermis, vulva, pharyngeal muscle, rectal gland, tubular rectal epithelium cells, and tubular neuronal support cells in the head and tail.

The protein resides in the cytoplasm. The protein localises to the membrane. Functionally, may insert into membranes and form chloride ion channels. Involved in the formation of the excretory canal. Required to prevent cystic lumenal expansions in the excretory cell. Not required for formation of the initial tube, but is required for regulating the size of the tube lumen as it grows. This is Chloride intracellular channel exc-4 (exc-4) from Caenorhabditis elegans.